The chain runs to 923 residues: Glucosidase 2 subunit alpha (923 aa).

The N-terminal stretch at 1 to 25 is a signal peptide; the sequence is MRYHGICWFIFQAAIIFAIFGSCQG. Asn-262 carries N-linked (GlcNAc...) asparagine glycosylation. Asp-524 serves as the catalytic Nucleophile. Glu-527 is an active-site residue. N-linked (GlcNAc...) asparagine glycosylation occurs at Asn-563. Asp-600 functions as the Proton donor in the catalytic mechanism. The N-linked (GlcNAc...) asparagine glycan is linked to Asn-822.

The protein belongs to the glycosyl hydrolase 31 family. In terms of assembly, heterodimer of a catalytic subunit alpha (gls2) and a subunit beta (gtb1).

The protein resides in the endoplasmic reticulum. The catalysed reaction is N(4)-(alpha-D-Glc-(1-&gt;3)-alpha-D-Man-(1-&gt;2)-alpha-D-Man-(1-&gt;2)-alpha-D-Man-(1-&gt;3)-[alpha-D-Man-(1-&gt;2)-alpha-D-Man-(1-&gt;3)-[alpha-D-Man-(1-&gt;2)-alpha-D-Man-(1-&gt;6)]-alpha-D-Man-(1-&gt;6)]-beta-D-Man-(1-&gt;4)-beta-D-GlcNAc-(1-&gt;4)-beta-D-GlcNAc)-L-asparaginyl-[protein] + H2O = N(4)-(alpha-D-Man-(1-&gt;2)-alpha-D-Man-(1-&gt;2)-alpha-D-Man-(1-&gt;3)-[alpha-D-Man-(1-&gt;2)-alpha-D-Man-(1-&gt;3)-[alpha-D-Man-(1-&gt;2)-alpha-D-Man-(1-&gt;6)]-alpha-D-Man-(1-&gt;6)]-beta-D-Man-(1-&gt;4)-beta-D-GlcNAc-(1-&gt;4)-beta-D-GlcNAc)-L-asparaginyl-[protein] (N-glucan mannose isomer 9A1,2,3B1,2,3) + beta-D-glucose. It carries out the reaction N(4)-(alpha-D-Glc-(1-&gt;3)-alpha-D-Glc-(1-&gt;3)-alpha-D-Man-(1-&gt;2)-alpha-D-Man-(1-&gt;2)-alpha-D-Man-(1-&gt;3)-[alpha-D-Man-(1-&gt;2)-alpha-D-Man-(1-&gt;3)-[alpha-D-Man-(1-&gt;2)-alpha-D-Man-(1-&gt;6)]-alpha-D-Man-(1-&gt;6)]-beta-D-Man-(1-&gt;4)-beta-D-GlcNAc-(1-&gt;4)-beta-D-GlcNAc)-L-asparaginyl-[protein] + H2O = N(4)-(alpha-D-Glc-(1-&gt;3)-alpha-D-Man-(1-&gt;2)-alpha-D-Man-(1-&gt;2)-alpha-D-Man-(1-&gt;3)-[alpha-D-Man-(1-&gt;2)-alpha-D-Man-(1-&gt;3)-[alpha-D-Man-(1-&gt;2)-alpha-D-Man-(1-&gt;6)]-alpha-D-Man-(1-&gt;6)]-beta-D-Man-(1-&gt;4)-beta-D-GlcNAc-(1-&gt;4)-beta-D-GlcNAc)-L-asparaginyl-[protein] + beta-D-glucose. Its pathway is glycan metabolism; N-glycan metabolism. Its function is as follows. Catalytic subunit of glucosidase 2, which cleaves sequentially the 2 innermost alpha-1,3-linked glucose residues from the Glc(2)Man(9)GlcNAc(2) oligosaccharide precursor of immature glycoproteins. The sequence is that of Glucosidase 2 subunit alpha from Schizosaccharomyces pombe (strain 972 / ATCC 24843) (Fission yeast).